Consider the following 120-residue polypeptide: ATP-dependent Clp protease adapter protein ClpS (120 aa).

A disordered region spans residues 1–25 (MHARSEIRLTFNQDRPQSNEDDGSG).

It belongs to the ClpS family. As to quaternary structure, binds to the N-terminal domain of the chaperone ClpA.

Involved in the modulation of the specificity of the ClpAP-mediated ATP-dependent protein degradation. The polypeptide is ATP-dependent Clp protease adapter protein ClpS (Pseudomonas putida (strain W619)).